We begin with the raw amino-acid sequence, 276 residues long: Vitamin B12-binding protein (276 aa).

The first 20 residues, 1–20, serve as a signal peptide directing secretion; that stretch reads MIVRFLCWLTGLLLCTAAYA. One can recognise a Fe/B12 periplasmic-binding domain in the interval 24-273; that stretch reads RVISLAPHAT…QLTALSPGSS (250 aa). Cys186 and Cys262 are disulfide-bonded.

The protein belongs to the BtuF family. The complex is composed of two ATP-binding proteins (BtuD), two transmembrane proteins (BtuC) and a solute-binding protein (BtuF).

It localises to the periplasm. Functionally, part of the ABC transporter complex BtuCDF involved in vitamin B12 import. Binds vitamin B12 and delivers it to the periplasmic surface of BtuC. The protein is Vitamin B12-binding protein of Pectobacterium carotovorum subsp. carotovorum (strain PC1).